A 263-amino-acid polypeptide reads, in one-letter code: MNIYLIGILCIVGLIISQGSTANGSPLDDRFNDVNTINKKQFTEEEFSRLINSMLKKYIEDKNVDIRIIGNKKDKQPTQKTTPKPTTPKQINDGTSDKTSDTHTIKRTTPKPTTPKQINDGTSDKTSDTHTIKRTTPKPTTPKQINDGTSDKTSDTHTIKRTTPKPTTPKQINDGTSDKTSDTHTIKRTTPKPTTPKQINDGTSDKPKSIADIFLINKPKVPLWIVNPLYYMVEKFVQIMGYLLEDDDTLELNLPKYYYDKSI.

Residues 1-21 form the signal peptide; it reads MNIYLIGILCIVGLIISQGST. The interval 70–207 is disordered; sequence GNKKDKQPTQ…QINDGTSDKP (138 aa). Over residues 78–90 the composition is skewed to low complexity; that stretch reads TQKTTPKPTTPKQ. Repeat copies occupy residues 81–107, 108–134, 135–161, 162–188, and 189–206. The tract at residues 81-189 is 5 X 27 AA tandem repeats; that stretch reads TTPKPTTPKQ…TSDTHTIKRT (109 aa). Composition is skewed to basic and acidic residues over residues 95-104, 122-131, 149-158, and 176-185; these read TSDKTSDTHT.

The sequence is that of Antigen 10-3 from Schistosoma mansoni (Blood fluke).